Consider the following 360-residue polypeptide: Chorismate synthase (360 aa).

An NADP(+)-binding site is contributed by Arg-46. FMN is bound by residues 123–125 (RSS), 235–236 (NA), Gly-275, 290–294 (KPTPS), and Arg-316.

Belongs to the chorismate synthase family. Homotetramer. FMNH2 serves as cofactor.

The enzyme catalyses 5-O-(1-carboxyvinyl)-3-phosphoshikimate = chorismate + phosphate. It functions in the pathway metabolic intermediate biosynthesis; chorismate biosynthesis; chorismate from D-erythrose 4-phosphate and phosphoenolpyruvate: step 7/7. In terms of biological role, catalyzes the anti-1,4-elimination of the C-3 phosphate and the C-6 proR hydrogen from 5-enolpyruvylshikimate-3-phosphate (EPSP) to yield chorismate, which is the branch point compound that serves as the starting substrate for the three terminal pathways of aromatic amino acid biosynthesis. This reaction introduces a second double bond into the aromatic ring system. In Wolinella succinogenes (strain ATCC 29543 / DSM 1740 / CCUG 13145 / JCM 31913 / LMG 7466 / NCTC 11488 / FDC 602W) (Vibrio succinogenes), this protein is Chorismate synthase.